A 168-amino-acid polypeptide reads, in one-letter code: G/U mismatch-specific DNA glycosylase (168 aa).

It belongs to the uracil-DNA glycosylase (UDG) superfamily. TDG/mug family. In terms of assembly, binds DNA as a monomer.

It localises to the cytoplasm. It catalyses the reaction Specifically hydrolyzes mismatched double-stranded DNA and polynucleotides, releasing free uracil.. Excises ethenocytosine and uracil, which can arise by alkylation or deamination of cytosine, respectively, from the corresponding mispairs with guanine in ds-DNA. It is capable of hydrolyzing the carbon-nitrogen bond between the sugar-phosphate backbone of the DNA and the mispaired base. The complementary strand guanine functions in substrate recognition. Required for DNA damage lesion repair in stationary-phase cells. The polypeptide is G/U mismatch-specific DNA glycosylase (Enterobacter sp. (strain 638)).